The following is a 336-amino-acid chain: Cell division protein ZipA (336 aa).

The Periplasmic segment spans residues Met-1–Glu-2. A helical transmembrane segment spans residues Leu-3–Leu-23. Residues Trp-24–Ser-336 lie on the Cytoplasmic side of the membrane. Residues Ser-57–Asp-76 form a disordered region. A compositionally biased stretch (polar residues) spans Asn-59–His-70.

The protein belongs to the ZipA family. As to quaternary structure, interacts with FtsZ via their C-terminal domains.

The protein resides in the cell inner membrane. Its function is as follows. Essential cell division protein that stabilizes the FtsZ protofilaments by cross-linking them and that serves as a cytoplasmic membrane anchor for the Z ring. Also required for the recruitment to the septal ring of downstream cell division proteins. This Actinobacillus pleuropneumoniae serotype 7 (strain AP76) protein is Cell division protein ZipA.